Here is a 137-residue protein sequence, read N- to C-terminus: Global transcriptional regulator Spx (137 aa).

Cysteines 10 and 13 form a disulfide.

The protein belongs to the ArsC family. Spx subfamily. Interacts with the C-terminal domain of the alpha subunit of the RNAP.

The protein localises to the cytoplasm. Functionally, global transcriptional regulator that plays a key role in stress response and exerts either positive or negative regulation of genes. Acts by interacting with the C-terminal domain of the alpha subunit of the RNA polymerase (RNAP). This interaction can enhance binding of RNAP to the promoter region of target genes and stimulate their transcription, or block interaction of RNAP with activator. The sequence is that of Global transcriptional regulator Spx from Streptococcus agalactiae serotype III (strain NEM316).